We begin with the raw amino-acid sequence, 175 residues long: uncharacterized protein (175 aa).

Polar residues predominate over residues 1 to 14 (MNTSSRIQLPSSND). Disordered regions lie at residues 1–31 (MNTSSRIQLPSSNDAHVYDGRSNEPKASKRS) and 127–175 (ARSR…QSKR). Basic and acidic residues predominate over residues 16–27 (HVYDGRSNEPKA). Low complexity predominate over residues 130–149 (RASSVSNSRLNSRTNSSVSL). The span at 154 to 175 (GSSSWKNKIKNAVSNVTDQSKR) shows a compositional bias: polar residues.

Its subcellular location is the cytoplasm. The protein localises to the nucleus. This is an uncharacterized protein from Schizosaccharomyces pombe (strain 972 / ATCC 24843) (Fission yeast).